A 271-amino-acid polypeptide reads, in one-letter code: Putative cysteine protease YopT-like blr2140 (271 aa).

The disordered stretch occupies residues 1–81; the sequence is MYDRIGGSST…STSSPESPAT (81 aa). Residues 7 to 29 show a composition bias toward polar residues; that stretch reads GSSTRTSQTDEPSQSVDSGSFTE. The span at 65–81 shows a compositional bias: low complexity; sequence TSSASEPSTSSPESPAT. The active site involves Cys100. The segment at 114–136 is disordered; that stretch reads SPSTRMSALTPGSQTHASAAERQ. Active-site residues include His213 and Asp228.

It belongs to the peptidase C58 family.

Potential cysteine protease, which may play a central role after invasion of host cell. The protein is Putative cysteine protease YopT-like blr2140 of Bradyrhizobium diazoefficiens (strain JCM 10833 / BCRC 13528 / IAM 13628 / NBRC 14792 / USDA 110).